Reading from the N-terminus, the 558-residue chain is DNA ligase B (558 aa).

Lysine 126 serves as the catalytic N6-AMP-lysine intermediate.

It belongs to the NAD-dependent DNA ligase family. LigB subfamily.

The enzyme catalyses NAD(+) + (deoxyribonucleotide)n-3'-hydroxyl + 5'-phospho-(deoxyribonucleotide)m = (deoxyribonucleotide)n+m + AMP + beta-nicotinamide D-nucleotide.. Functionally, catalyzes the formation of phosphodiester linkages between 5'-phosphoryl and 3'-hydroxyl groups in double-stranded DNA using NAD as a coenzyme and as the energy source for the reaction. This Pseudomonas fluorescens (strain Pf0-1) protein is DNA ligase B.